A 334-amino-acid polypeptide reads, in one-letter code: Hemin transport system permease protein HmuU (334 aa).

A run of 9 helical transmembrane segments spans residues leucine 9–glycine 29, leucine 60–phenylalanine 80, alanine 96–leucine 116, tyrosine 117–leucine 137, leucine 149–isoleucine 169, tryptophan 191–glutamine 211, alanine 244–valine 264, tryptophan 278–alanine 298, and glutamate 306–leucine 326.

It belongs to the binding-protein-dependent transport system permease family. FecCD subfamily.

The protein resides in the cell inner membrane. Functionally, part of the binding-protein-dependent transport system for hemin; probably responsible for the translocation of the substrate across the membrane. This chain is Hemin transport system permease protein HmuU (hmuU), found in Yersinia pestis.